The chain runs to 453 residues: Tubulin gamma chain (453 aa).

142 to 148 is a binding site for GTP; that stretch reads AGGTGSG.

This sequence belongs to the tubulin family.

It localises to the cytoplasm. Its subcellular location is the cytoskeleton. The protein resides in the microtubule organizing center. The protein localises to the spindle pole body. Functionally, tubulin is the major constituent of microtubules. The gamma chain is found at microtubule organizing centers (MTOC) such as the spindle poles or the centrosome, suggesting that it is involved in the minus-end nucleation of microtubule assembly. This Coprinopsis cinerea (strain Okayama-7 / 130 / ATCC MYA-4618 / FGSC 9003) (Inky cap fungus) protein is Tubulin gamma chain (TUB4).